We begin with the raw amino-acid sequence, 589 residues long: Probable galacturonosyltransferase 6 (589 aa).

At 1-6 (MKQIRR) the chain is on the cytoplasmic side. The helical; Signal-anchor for type II membrane protein transmembrane segment at 7–27 (WQRILILALLSISVFAPLIFV) threads the bilayer. Topologically, residues 28-589 (SNRLKSITPV…TYLQQCNLQA (562 aa)) are lumenal. 2 N-linked (GlcNAc...) asparagine glycosylation sites follow: Asn-83 and Asn-126. The disordered stretch occupies residues 127–151 (KTDFKPPLSKGEKNTRVQPDRATDV). Residues 136–151 (KGEKNTRVQPDRATDV) show a composition bias toward basic and acidic residues. Residues Asn-317 and Asn-454 are each glycosylated (N-linked (GlcNAc...) asparagine).

Belongs to the glycosyltransferase 8 family. In terms of tissue distribution, expressed in roots, inflorescences, siliques, leaves and stems.

Its subcellular location is the golgi apparatus membrane. Its pathway is glycan metabolism; pectin biosynthesis. Probably involved in pectin biosynthesis in cell walls. This chain is Probable galacturonosyltransferase 6 (GAUT6), found in Arabidopsis thaliana (Mouse-ear cress).